The sequence spans 643 residues: Macrolide export ATP-binding/permease protein MacB (643 aa).

An ABC transporter domain is found at 6 to 244; the sequence is IELKGVSRVF…QVRSPFGVRH (239 aa). Residue 42–49 participates in ATP binding; sequence GASGSGKS. Transmembrane regions (helical) follow at residues 270 to 290, 518 to 538, 569 to 589, and 606 to 626; these read VLTL…LAIG, LTIL…IGVM, FLIE…VIGL, and LMPI…FGYL.

The protein belongs to the ABC transporter superfamily. Macrolide exporter (TC 3.A.1.122) family. As to quaternary structure, homodimer.

It localises to the cell inner membrane. In terms of biological role, non-canonical ABC transporter that contains transmembrane domains (TMD), which form a pore in the inner membrane, and an ATP-binding domain (NBD), which is responsible for energy generation. Confers resistance against macrolides. The sequence is that of Macrolide export ATP-binding/permease protein MacB from Wolinella succinogenes (strain ATCC 29543 / DSM 1740 / CCUG 13145 / JCM 31913 / LMG 7466 / NCTC 11488 / FDC 602W) (Vibrio succinogenes).